The sequence spans 471 residues: A-type ATP synthase subunit B (471 aa).

It belongs to the ATPase alpha/beta chains family. Has multiple subunits with at least A(3), B(3), C, D, E, F, H, I and proteolipid K(x).

The protein resides in the cell membrane. In terms of biological role, component of the A-type ATP synthase that produces ATP from ADP in the presence of a proton gradient across the membrane. The B chain is a regulatory subunit. The sequence is that of A-type ATP synthase subunit B from Halobacterium salinarum (strain ATCC 29341 / DSM 671 / R1).